Here is a 147-residue protein sequence, read N- to C-terminus: UPF0306 protein YhbP (147 aa).

Belongs to the UPF0306 family.

The protein is UPF0306 protein YhbP of Salmonella agona (strain SL483).